We begin with the raw amino-acid sequence, 594 residues long: Type I restriction enzyme EcoEI specificity subunit (594 aa).

Belongs to the type-I restriction system S methylase family. The type I restriction/modification system is composed of three polypeptides R, M and S; the restriction enzyme has stoichiometry R(2)M(2)S(1) while the methyltransferase is M(2)S(1).

The specificity (S) subunit of a type I restriction enzyme; this subunit dictates DNA sequence specificity. The M and S subunits together form a methyltransferase (MTase) that methylates two adenine residues of the sequence 5'-GAGN(7)ATGC-3'. In the presence of the R subunit the complex can also act as an endonuclease, binding to the same target sequence but cutting the DNA some distance from this site. Whether the DNA is cut or modified depends on the methylation state of the target sequence. When the target site is unmodified, the DNA is cut. When the target site is hemimethylated, the complex acts as a maintenance MTase modifying the DNA so that both strands become methylated. After locating a non-methylated recognition site, the enzyme complex serves as a molecular motor that translocates DNA in an ATP-dependent manner until a collision occurs that triggers cleavage. This is Type I restriction enzyme EcoEI specificity subunit from Escherichia coli.